Consider the following 233-residue polypeptide: Large ribosomal subunit protein uL1 (233 aa).

The protein belongs to the universal ribosomal protein uL1 family. Part of the 50S ribosomal subunit.

In terms of biological role, binds directly to 23S rRNA. The L1 stalk is quite mobile in the ribosome, and is involved in E site tRNA release. Its function is as follows. Protein L1 is also a translational repressor protein, it controls the translation of the L11 operon by binding to its mRNA. The polypeptide is Large ribosomal subunit protein uL1 (Deinococcus geothermalis (strain DSM 11300 / CIP 105573 / AG-3a)).